Consider the following 409-residue polypeptide: L-cysteine:1D-myo-inositol 2-amino-2-deoxy-alpha-D-glucopyranoside ligase (409 aa).

Residue Cys43 participates in Zn(2+) binding. L-cysteinyl-5'-AMP-binding positions include 43–46 (CGIT), Thr58, and 81–83 (NVT). The 'HIGH' region signature appears at 45 to 55 (ITPYDATHMGH). Positions 183–188 (ERGGDP) match the 'ERGGDP' region motif. Trp224 lines the L-cysteinyl-5'-AMP pocket. Cys228 serves as a coordination point for Zn(2+). 246-248 (GSD) lines the L-cysteinyl-5'-AMP pocket. His253 contributes to the Zn(2+) binding site. Residue Val280 participates in L-cysteinyl-5'-AMP binding. The 'KMSKS' region motif lies at 286 to 290 (KMSKS).

This sequence belongs to the class-I aminoacyl-tRNA synthetase family. MshC subfamily. As to quaternary structure, monomer. Zn(2+) is required as a cofactor.

It carries out the reaction 1D-myo-inositol 2-amino-2-deoxy-alpha-D-glucopyranoside + L-cysteine + ATP = 1D-myo-inositol 2-(L-cysteinylamino)-2-deoxy-alpha-D-glucopyranoside + AMP + diphosphate + H(+). Functionally, catalyzes the ATP-dependent condensation of GlcN-Ins and L-cysteine to form L-Cys-GlcN-Ins. The chain is L-cysteine:1D-myo-inositol 2-amino-2-deoxy-alpha-D-glucopyranoside ligase from Streptomyces scabiei (strain 87.22).